We begin with the raw amino-acid sequence, 394 residues long: NAD(P)H-quinone oxidoreductase subunit H 2 (394 aa).

The protein belongs to the complex I 49 kDa subunit family. In terms of assembly, NDH-1 can be composed of about 15 different subunits; different subcomplexes with different compositions have been identified which probably have different functions.

It localises to the cell inner membrane. The catalysed reaction is a plastoquinone + NADH + (n+1) H(+)(in) = a plastoquinol + NAD(+) + n H(+)(out). It catalyses the reaction a plastoquinone + NADPH + (n+1) H(+)(in) = a plastoquinol + NADP(+) + n H(+)(out). Functionally, NDH-1 shuttles electrons from an unknown electron donor, via FMN and iron-sulfur (Fe-S) centers, to quinones in the respiratory and/or the photosynthetic chain. The immediate electron acceptor for the enzyme in this species is believed to be plastoquinone. Couples the redox reaction to proton translocation, and thus conserves the redox energy in a proton gradient. Cyanobacterial NDH-1 also plays a role in inorganic carbon-concentration. This is NAD(P)H-quinone oxidoreductase subunit H 2 from Gloeobacter violaceus (strain ATCC 29082 / PCC 7421).